A 111-amino-acid chain; its full sequence is 2Fe-2S ferredoxin (111 aa).

One can recognise a 2Fe-2S ferredoxin-type domain in the interval 1–104 (MPKIFFLPHK…DIEVQIPLYN (104 aa)). Residues cysteine 42, cysteine 48, cysteine 51, and cysteine 87 each coordinate [2Fe-2S] cluster.

The protein belongs to the adrenodoxin/putidaredoxin family. Requires [2Fe-2S] cluster as cofactor.

Functionally, ferredoxin are iron-sulfur proteins that transfer electrons in a wide variety of metabolic reactions. In Buchnera aphidicola subsp. Schizaphis graminum (strain Sg), this protein is 2Fe-2S ferredoxin (fdx).